The chain runs to 511 residues: Bifunctional purine biosynthesis protein PurH (511 aa).

One can recognise an MGS-like domain in the interval 1-145 (MKRRALVSVS…KNHQHVTVVV (145 aa)).

This sequence belongs to the PurH family.

The catalysed reaction is (6R)-10-formyltetrahydrofolate + 5-amino-1-(5-phospho-beta-D-ribosyl)imidazole-4-carboxamide = 5-formamido-1-(5-phospho-D-ribosyl)imidazole-4-carboxamide + (6S)-5,6,7,8-tetrahydrofolate. It carries out the reaction IMP + H2O = 5-formamido-1-(5-phospho-D-ribosyl)imidazole-4-carboxamide. It functions in the pathway purine metabolism; IMP biosynthesis via de novo pathway; 5-formamido-1-(5-phospho-D-ribosyl)imidazole-4-carboxamide from 5-amino-1-(5-phospho-D-ribosyl)imidazole-4-carboxamide (10-formyl THF route): step 1/1. Its pathway is purine metabolism; IMP biosynthesis via de novo pathway; IMP from 5-formamido-1-(5-phospho-D-ribosyl)imidazole-4-carboxamide: step 1/1. The sequence is that of Bifunctional purine biosynthesis protein PurH from Halalkalibacterium halodurans (strain ATCC BAA-125 / DSM 18197 / FERM 7344 / JCM 9153 / C-125) (Bacillus halodurans).